We begin with the raw amino-acid sequence, 113 residues long: MANFISLKKNEDILDTIKKQQKIHSNQIVVYFRKTNLKNVRLAISISKKKFKLATQRNRIRRLIKAWFIAADIPIKSYDIVVLVKPSFIDGSFVLNCNNLKIILQRIINKEKR.

The protein belongs to the RnpA family. In terms of assembly, consists of a catalytic RNA component (M1 or rnpB) and a protein subunit.

It carries out the reaction Endonucleolytic cleavage of RNA, removing 5'-extranucleotides from tRNA precursor.. In terms of biological role, RNaseP catalyzes the removal of the 5'-leader sequence from pre-tRNA to produce the mature 5'-terminus. It can also cleave other RNA substrates such as 4.5S RNA. The protein component plays an auxiliary but essential role in vivo by binding to the 5'-leader sequence and broadening the substrate specificity of the ribozyme. This chain is Ribonuclease P protein component, found in Ureaplasma parvum serovar 3 (strain ATCC 27815 / 27 / NCTC 11736).